Consider the following 103-residue polypeptide: N(4)-acetylcytidine amidohydrolase (103 aa).

The ASCH domain maps to 6–94 (ITFFQRFQDD…IAGIYPDQTQ (89 aa)). Lys-21 (proton acceptor) is an active-site residue. The active-site Nucleophile is the Thr-24. The active-site Proton donor is the Glu-74.

It belongs to the N(4)-acetylcytidine amidohydrolase family.

It catalyses the reaction N(4)-acetylcytidine + H2O = cytidine + acetate + H(+). It carries out the reaction N(4)-acetyl-2'-deoxycytidine + H2O = 2'-deoxycytidine + acetate + H(+). The enzyme catalyses N(4)-acetylcytosine + H2O = cytosine + acetate + H(+). In terms of biological role, catalyzes the hydrolysis of N(4)-acetylcytidine (ac4C). The sequence is that of N(4)-acetylcytidine amidohydrolase from Citrobacter koseri (strain ATCC BAA-895 / CDC 4225-83 / SGSC4696).